We begin with the raw amino-acid sequence, 227 residues long: NADH-quinone oxidoreductase subunit C (227 aa).

Belongs to the complex I 30 kDa subunit family. As to quaternary structure, NDH-1 is composed of 14 different subunits. Subunits NuoB, C, D, E, F, and G constitute the peripheral sector of the complex.

It localises to the cell inner membrane. The enzyme catalyses a quinone + NADH + 5 H(+)(in) = a quinol + NAD(+) + 4 H(+)(out). Functionally, NDH-1 shuttles electrons from NADH, via FMN and iron-sulfur (Fe-S) centers, to quinones in the respiratory chain. The immediate electron acceptor for the enzyme in this species is believed to be ubiquinone. Couples the redox reaction to proton translocation (for every two electrons transferred, four hydrogen ions are translocated across the cytoplasmic membrane), and thus conserves the redox energy in a proton gradient. This Coxiella burnetii (strain Dugway 5J108-111) protein is NADH-quinone oxidoreductase subunit C.